The sequence spans 238 residues: Large ribosomal subunit protein uL1 (238 aa).

The protein belongs to the universal ribosomal protein uL1 family. Part of the 50S ribosomal subunit.

Its function is as follows. Binds directly to 23S rRNA. The L1 stalk is quite mobile in the ribosome, and is involved in E site tRNA release. Protein L1 is also a translational repressor protein, it controls the translation of the L11 operon by binding to its mRNA. The chain is Large ribosomal subunit protein uL1 from Gloeobacter violaceus (strain ATCC 29082 / PCC 7421).